The following is a 304-amino-acid chain: Glutaminase (304 aa).

Positions 61, 113, 158, 165, 189, 240, and 258 each coordinate substrate.

The protein belongs to the glutaminase family. In terms of assembly, homotetramer.

The enzyme catalyses L-glutamine + H2O = L-glutamate + NH4(+). This Fusobacterium nucleatum subsp. nucleatum (strain ATCC 25586 / DSM 15643 / BCRC 10681 / CIP 101130 / JCM 8532 / KCTC 2640 / LMG 13131 / VPI 4355) protein is Glutaminase.